A 167-amino-acid chain; its full sequence is Ubiquitin-fold modifier-conjugating enzyme 1 (167 aa).

The active-site Glycyl thioester intermediate is the Cys116.

Belongs to the ubiquitin-conjugating enzyme family. UFC1 subfamily. In terms of assembly, interacts with UBA5 (via C-terminus). Interacts with UFL1. Interacts with UFM1.

E2-like enzyme which specifically catalyzes the second step in ufmylation. Accepts the ubiquitin-like modifier UFM1 from the E1 enzyme UBA5 and forms an intermediate with UFM1 via a thioester linkage. Ufmylation is involved in various processes, such as ribosome recycling, response to DNA damage, interferon response or reticulophagy (also called ER-phagy). The chain is Ubiquitin-fold modifier-conjugating enzyme 1 from Esox lucius (Northern pike).